Here is a 439-residue protein sequence, read N- to C-terminus: COBRA-like protein 7 (439 aa).

A signal peptide spans 1-22; the sequence is MDVDQLILFVFVCCLSSRFADA. N-linked (GlcNAc...) asparagine glycosylation is found at asparagine 138, asparagine 181, asparagine 186, asparagine 232, asparagine 312, and asparagine 346. The GPI-anchor amidated asparagine moiety is linked to residue asparagine 412. Positions 413–439 are cleaved as a propeptide — removed in mature form; that stretch reads GGPDSRVSAAQLIASSCLLLPFIFLIM.

Belongs to the COBRA family.

Its subcellular location is the cell membrane. Its function is as follows. Involved in determining the orientation of cell expansion, probably by playing an important role in cellulose deposition. May act by recruiting cellulose synthesizing complexes to discrete positions on the cell surface. The polypeptide is COBRA-like protein 7 (BC1LP1) (Oryza sativa subsp. japonica (Rice)).